Consider the following 427-residue polypeptide: Tyrosine--tRNA ligase (427 aa).

L-tyrosine is bound at residue Tyr33. The short motif at Pro38 to Asn47 is the 'HIGH' region element. L-tyrosine contacts are provided by Tyr168 and Gln172. The short motif at Lys228 to Ser232 is the 'KMSKS' region element. An ATP-binding site is contributed by Lys231. Positions Leu361 to Asn427 constitute an S4 RNA-binding domain.

Belongs to the class-I aminoacyl-tRNA synthetase family. TyrS type 1 subfamily. As to quaternary structure, homodimer.

Its subcellular location is the cytoplasm. The enzyme catalyses tRNA(Tyr) + L-tyrosine + ATP = L-tyrosyl-tRNA(Tyr) + AMP + diphosphate + H(+). In terms of biological role, catalyzes the attachment of tyrosine to tRNA(Tyr) in a two-step reaction: tyrosine is first activated by ATP to form Tyr-AMP and then transferred to the acceptor end of tRNA(Tyr). This is Tyrosine--tRNA ligase from Cytophaga hutchinsonii (strain ATCC 33406 / DSM 1761 / CIP 103989 / NBRC 15051 / NCIMB 9469 / D465).